The following is a 639-amino-acid chain: DNA gyrase subunit B (639 aa).

The span at 392–402 shows a compositional bias: basic and acidic residues; sequence QAEELTRRKSA. The tract at residues 392-417 is disordered; sequence QAEELTRRKSALESTSLPGKLADCQS. The Toprim domain occupies 423 to 537; it reads SELFIVEGDS…AGYVYAAQPP (115 aa). Mg(2+) contacts are provided by Glu429, Asp502, and Asp504.

This sequence belongs to the type II topoisomerase GyrB family. As to quaternary structure, heterotetramer, composed of two GyrA and two GyrB chains. In the heterotetramer, GyrA contains the active site tyrosine that forms a transient covalent intermediate with DNA, while GyrB binds cofactors and catalyzes ATP hydrolysis. It depends on Mg(2+) as a cofactor. Requires Mn(2+) as cofactor. The cofactor is Ca(2+).

The protein resides in the cytoplasm. It catalyses the reaction ATP-dependent breakage, passage and rejoining of double-stranded DNA.. Its function is as follows. A type II topoisomerase that negatively supercoils closed circular double-stranded (ds) DNA in an ATP-dependent manner to modulate DNA topology and maintain chromosomes in an underwound state. Negative supercoiling favors strand separation, and DNA replication, transcription, recombination and repair, all of which involve strand separation. Also able to catalyze the interconversion of other topological isomers of dsDNA rings, including catenanes and knotted rings. Type II topoisomerases break and join 2 DNA strands simultaneously in an ATP-dependent manner. The protein is DNA gyrase subunit B of Haloferax lucentense (strain DSM 14919 / JCM 9276 / NCIMB 13854 / Aa 2.2) (Haloferax alicantei).